The chain runs to 582 residues: MEAANCSLRVKRPLLDPRFEGYKLSLEPLPCYQLELDAAVAEVKLRDDQYTLEHMHAFGMYNYLHCDAWYQDSVYYIDNLGRIMNLTVMLDTALGKPREVFRLPTDVTAYDNRLCASIHFTSPSWVTLSDGTGRLYVIGTGDRGNSPEKWEIMFNEELGNPFIIIHSISLLKAEEHSVAILLLRIEKEELDLKGSGFYVSLEWVVVTKKKEDSKKYEITKHHVLRGKSVPHYAAIEPNGNGLMIVSYKSFKVISGDQDLEENMDEDRPEKIKVEPLYYWQQSEDDLTVTVRLPESSTKEDIQIQFLPDNINIKLKDIQVLEGKLYSSIDHEGSTWTIKENDSLEISLIKKNEGLMWPELVVGDKQGELLRDPAQCAAIAERLMHLTSDELNPNPDKEKPACNAQELEECDIFFEESSSLCRFDGNTLQTTHVVNLGSNQYLFSVIVDPKEMPCFCLRHDVDALLWQPHCSKQDDMWEHIATFNALGYVQASKRDKKFFACAPNYSYAALCECLRRVFIYRQPTPMSTVLYNRKEGRHVGQVAKQQVASLETNDPILGFQATNERLFVLTTKNLFLIRVNTEN.

At Ser7 the chain carries Phosphoserine. Residues 272–360 (KVEPLYYWQQ…NEGLMWPELV (89 aa)) enclose the CS domain. Residue Ser387 is modified to Phosphoserine.

The protein resides in the cytoplasm. It localises to the nucleus. In Mus musculus (Mouse), this protein is NudC domain-containing protein 1.